The following is a 319-amino-acid chain: Ribonucleoside-diphosphate reductase small chain (319 aa).

Fe cation is bound by residues aspartate 70, glutamate 101, and histidine 104. The active site involves tyrosine 108. Fe cation-binding residues include glutamate 163, glutamate 197, and histidine 200. The interaction with R1 stretch occupies residues 313-319 (FSLDVDF).

This sequence belongs to the ribonucleoside diphosphate reductase small chain family. In terms of assembly, interacts with RNR1/OPG080 subunit. Can interact with host RNR1 supunit. It depends on Fe cation as a cofactor.

The catalysed reaction is a 2'-deoxyribonucleoside 5'-diphosphate + [thioredoxin]-disulfide + H2O = a ribonucleoside 5'-diphosphate + [thioredoxin]-dithiol. Its function is as follows. Ribonucleoside-diphosphate reductase holoenzyme provides the precursors necessary for viral DNA synthesis. Allows virus growth in non-dividing cells. Catalyzes the biosynthesis of deoxyribonucleotides from the corresponding ribonucleotides. The sequence is that of Ribonucleoside-diphosphate reductase small chain (OPG048) from Variola virus.